The sequence spans 503 residues: Galactose/methyl galactoside import ATP-binding protein MglA 2 (503 aa).

2 ABC transporter domains span residues 11–246 and 257–503; these read LEMT…VGRE and TPKE…SRYL. An ATP-binding site is contributed by 43–50; it reads GENGAGKS.

The protein belongs to the ABC transporter superfamily. Galactose/methyl galactoside importer (TC 3.A.1.2.3) family. The complex is composed of one ATP-binding protein (MglA), two transmembrane proteins (MglC) and a solute-binding protein (MglB).

The protein localises to the cell inner membrane. It carries out the reaction D-galactose(out) + ATP + H2O = D-galactose(in) + ADP + phosphate + H(+). It catalyses the reaction methyl beta-D-galactoside(out) + ATP + H2O = methyl beta-D-galactoside(in) + ADP + phosphate + H(+). Its function is as follows. Part of the ABC transporter complex MglABC involved in galactose/methyl galactoside import. Responsible for energy coupling to the transport system. The chain is Galactose/methyl galactoside import ATP-binding protein MglA 2 from Photobacterium profundum (strain SS9).